Consider the following 83-residue polypeptide: MAHKKGASSSRNGRDSNPQYLGVKKFGGEAVVAGNIIVRQRGTKFHAGKNVGVGKDHTLFALADGNVQFGVRRDRKVVDVVTE.

Residues Met1–Tyr20 form a disordered region. Positions Ala7–Gln19 are enriched in polar residues.

Belongs to the bacterial ribosomal protein bL27 family.

This Bifidobacterium animalis subsp. lactis (strain AD011) protein is Large ribosomal subunit protein bL27.